The following is a 314-amino-acid chain: Glucocorticoid receptor (314 aa).

Positions 1–44 are disordered; sequence ASAAVSAAPTEKEFPKTHSDVSSEQQNLKGQKGSNGGSMKLHTT. Residues 1–281 are modulating; it reads ASAAVSAAPT…SAATGPPPKL (281 aa). The span at 10 to 21 shows a compositional bias: basic and acidic residues; sequence TEKEFPKTHSDV. A phosphoserine mark is found at serine 65, serine 73, and serine 88. Residue lysine 120 forms a Glycyl lysine isopeptide (Lys-Gly) (interchain with G-Cter in SUMO2) linkage. The residue at position 129 (serine 129) is a Phosphoserine. Glycyl lysine isopeptide (Lys-Gly) (interchain with G-Cter in SUMO); alternate cross-links involve residues lysine 139 and lysine 155. Glycyl lysine isopeptide (Lys-Gly) (interchain with G-Cter in SUMO2); alternate cross-links involve residues lysine 139 and lysine 155. Serine 266 carries the phosphoserine modification. Lysine 280 participates in a covalent cross-link: Glycyl lysine isopeptide (Lys-Gly) (interchain with G-Cter in ubiquitin). The NR C4-type zinc finger occupies 282-314; the sequence is CLVCSDEASGCHYGVLTCGSCKVFFKRAVEGQH. The segment at residues 282-314 is a DNA-binding region (nuclear receptor); the sequence is CLVCSDEASGCHYGVLTCGSCKVFFKRAVEGQH.

This sequence belongs to the nuclear hormone receptor family. NR3 subfamily. As to quaternary structure, heteromultimeric cytoplasmic complex with HSP90AA1, HSPA1A/HSPA1B, and FKBP5 or another immunophilin such as PPID, STIP1, or the immunophilin homolog PPP5C. Upon ligand binding FKBP5 dissociates from the complex and FKBP4 takes its place, thereby linking the complex to dynein and mediating transport to the nucleus, where the complex dissociates. Probably forms a complex composed of chaperones HSP90 and HSP70, co-chaperones CDC37, PPP5C, TSC1 and client protein TSC2, CDK4, AKT, RAF1 and NR3C1; this complex does not contain co-chaperones STIP1/HOP and PTGES3/p23. Directly interacts with UNC45A. Binds to DNA as a homodimer, and as heterodimer with NR3C2 or the retinoid X receptor. Binds STAT5A and STAT5B homodimers and heterodimers. Interacts with NRIP1, POU2F1, POU2F2 and TRIM28. Interacts with several coactivator complexes, including the SMARCA4 complex, CREBBP/EP300, TADA2L (Ada complex) and p160 coactivators such as NCOA2 and NCOA6. Interaction with BAG1 inhibits transactivation. Interacts with HEXIM1 and TGFB1I1. Interacts with NCOA1. Interacts with NCOA3, SMARCA4, SMARCC1, SMARCD1, and SMARCE1. Interacts with CLOCK, CRY1 and CRY2 in a ligand-dependent fashion. Interacts with CIART. Interacts with RWDD3. Interacts with UBE2I/UBC9 and this interaction is enhanced in the presence of RWDD3. Interacts with GRIP1. Interacts with NR4A3 (via nuclear receptor DNA-binding domain), represses transcription activity of NR4A3 on the POMC promoter Nur response element (NurRE). Directly interacts with PNRC2 to attract and form a complex with UPF1 and DCP1A; the interaction leads to rapid mRNA degradation. Interacts with GSK3B. Interacts with FNIP1 and FNIP2. Interacts (via C-terminus) with HNRNPU (via C-terminus). Interacts with MCM3AP. Interacts (via domain NR LBD) with HSP90AA1 and HSP90AB1. In the absence of hormonal ligand, interacts with TACC1. Interacts (via NR LBD domain) with ZNF764 (via KRAB domain); the interaction regulates transcription factor activity of NR3C1 by directing its actions toward certain biologic pathways. Post-translationally, acetylation by CLOCK reduces its binding to glucocorticoid response elements and its transcriptional activity. Increased proteasome-mediated degradation in response to glucocorticoids. In terms of processing, phosphorylated in the absence of hormone; becomes hyperphosphorylated in the presence of glucocorticoid. The Ser-65, Ser-88 and Ser-266-phosphorylated forms are mainly cytoplasmic, and the Ser-73-phosphorylated form is nuclear. Phosphorylation at Ser-73 increases transcriptional activity. Phosphorylation at Ser-65, Ser-88 and Ser-266 decreases signaling capacity. Phosphorylation at Ser-266 may protect from glucocorticoid-induced apoptosis. Phosphorylation at Ser-65 and Ser-73 is not required in regulation of chromosome segregation. May be dephosphorylated by PPP5C, attenuates NR3C1 action. Post-translationally, ubiquitinated by UBR5, leading to its degradation: UBR5 specifically recognizes and binds ligand-bound NR3C1 when it is not associated with coactivators (NCOAs). In presence of NCOAs, the UBR5-degron is not accessible, preventing its ubiquitination and degradation. Sumoylation at Lys-139 and Lys-155 negatively regulates its transcriptional activity. Heat shock increases sumoylation in a RWDD3-dependent manner.

The protein resides in the cytoplasm. Its subcellular location is the nucleus. It localises to the mitochondrion. It is found in the cytoskeleton. The protein localises to the spindle. The protein resides in the microtubule organizing center. Its subcellular location is the centrosome. It localises to the chromosome. It is found in the nucleoplasm. Functionally, receptor for glucocorticoids (GC). Has a dual mode of action: as a transcription factor that binds to glucocorticoid response elements (GRE), both for nuclear and mitochondrial DNA, and as a modulator of other transcription factors. Affects inflammatory responses, cellular proliferation and differentiation in target tissues. Involved in chromatin remodeling. Plays a role in rapid mRNA degradation by binding to the 5' UTR of target mRNAs and interacting with PNRC2 in a ligand-dependent manner which recruits the RNA helicase UPF1 and the mRNA-decapping enzyme DCP1A, leading to RNA decay. Could act as a coactivator for STAT5-dependent transcription upon growth hormone (GH) stimulation and could reveal an essential role of hepatic GR in the control of body growth. Mediates glucocorticoid-induced apoptosis. Promotes accurate chromosome segregation during mitosis. May act as a tumor suppressor. May play a negative role in adipogenesis through the regulation of lipolytic and antilipogenic gene expression. The chain is Glucocorticoid receptor (NR3C1) from Ovis aries (Sheep).